Here is a 573-residue protein sequence, read N- to C-terminus: Phosphomethylpyrimidine synthase (573 aa).

Substrate-binding positions include Asn190, Met219, Tyr248, His284, 304 to 306 (SRG), 345 to 348 (DGLR), and Glu384. Residue His388 coordinates Zn(2+). Tyr411 lines the substrate pocket. His452 is a Zn(2+) binding site. [4Fe-4S] cluster-binding residues include Cys532, Cys535, and Cys540.

It belongs to the ThiC family. Requires [4Fe-4S] cluster as cofactor.

It carries out the reaction 5-amino-1-(5-phospho-beta-D-ribosyl)imidazole + S-adenosyl-L-methionine = 4-amino-2-methyl-5-(phosphooxymethyl)pyrimidine + CO + 5'-deoxyadenosine + formate + L-methionine + 3 H(+). It participates in cofactor biosynthesis; thiamine diphosphate biosynthesis. Its function is as follows. Catalyzes the synthesis of the hydroxymethylpyrimidine phosphate (HMP-P) moiety of thiamine from aminoimidazole ribotide (AIR) in a radical S-adenosyl-L-methionine (SAM)-dependent reaction. This chain is Phosphomethylpyrimidine synthase, found in Geobacillus sp. (strain WCH70).